Reading from the N-terminus, the 382-residue chain is Mannitol-1-phosphate 5-dehydrogenase (382 aa).

An NAD(+)-binding site is contributed by 3-14 (ALHFGAGNIGRG). Lys269 bears the N6-acetyllysine mark.

Belongs to the mannitol dehydrogenase family.

It carries out the reaction D-mannitol 1-phosphate + NAD(+) = beta-D-fructose 6-phosphate + NADH + H(+). In Shigella sonnei (strain Ss046), this protein is Mannitol-1-phosphate 5-dehydrogenase.